Reading from the N-terminus, the 569-residue chain is Phosphatase and actin regulator 2 (569 aa).

Residues 1-13 are compositionally biased toward polar residues; it reads MGQTSVSALSPQP. The disordered stretch occupies residues 1 to 47; it reads MGQTSVSALSPQPGSVDGLDKASIANSDGPPAGSQTPPFKRKGKLST. At S27 the chain carries Phosphoserine. At T36 the chain carries Phosphothreonine. The stretch at 71–96 is one RPEL 1 repeat; that stretch reads AVLERKISTRQSREELIRRGLLKELP. 2 disordered regions span residues 98-253 and 295-483; these read QDGD…TGKP and PTLP…QEAK. The segment covering 140 to 151 has biased composition (basic and acidic residues); the sequence is GPPREEQAEEKT. A compositionally biased stretch (low complexity) spans 162–176; it reads GSKASSSPSASSTSS. Residues 212 to 224 show a composition bias toward polar residues; the sequence is LSPNTVTSETSSL. The residue at position 357 (S357) is a Phosphoserine. A compositionally biased stretch (acidic residues) spans 386–399; it reads TDDDDEEDDDDDST. RPEL repeat units follow at residues 412–437, 450–475, and 488–513; these read DTLA…QRTS, TKLV…KQKN, and RRLS…RFNE. Positions 423–444 are enriched in basic and acidic residues; sequence SKKELEDKNILQRTSEEERQEL. Phosphoserine is present on S457. The segment covering 461 to 483 has biased composition (basic and acidic residues); the sequence is TTEELEQRSILKQKNEEEEQEAK. A Phosphoserine modification is found at S495.

It belongs to the phosphatase and actin regulator family. As to quaternary structure, binds PPP1CA and actin. In terms of tissue distribution, expressed in the brain with high levels in the cerebellum, specifically in the Purkinje cell layer, choroid plexus and thalamus (ventral, rhomboid and anterior nuclei). Moderate to high expression in the hippocampus, piriform cortex, olfactory bulb, entorhinal cortex, as well as in geniculate bodies, lamboid septal zone, preoptic area and ventral pallidum (at protein level).

In Rattus norvegicus (Rat), this protein is Phosphatase and actin regulator 2 (Phactr2).